We begin with the raw amino-acid sequence, 1013 residues long: Adhesion G-protein coupled receptor G2 (1013 aa).

An N-terminal signal peptide occupies residues 1–37 (MLFSGGQYSPVGRPEEVLLIYKIFLVIICFHAILVTS). Over 38–623 (LKENAGNSSL…TSLPPSQMMA (586 aa)) the chain is Extracellular. Residues N44, N78, N92, N104, N128, N137, N155, N179, N187, N366, N431, N452, N457, N524, N538, N543, N547, and N593 are each glycosylated (N-linked (GlcNAc...) asparagine). The region spanning 457–615 (NTTTFAAQDP…GILLDLSRTS (159 aa)) is the GAIN-B domain. 2 disulfide bridges follow: C566–C597 and C585–C599. The segment at 566 to 615 (CVFWDLNRNGGRGGWSSDGCSVKEKRMNETICTCSHLTSFGILLDLSRTS) is GPS. Positions 604–615 (SFGILLDLSRTS) are stachel. Residues 624 to 644 (LTFITYIGCGLSSIFLSVTLV) traverse the membrane as a helical segment. The Cytoplasmic portion of the chain corresponds to 645-663 (TYIAFEKIRRDYPSKILIQ). A helical transmembrane segment spans residues 664–684 (LCAALLLLNLVFLLDSWIALY). Over 685 to 688 (NARG) the chain is Extracellular. The chain crosses the membrane as a helical span at residues 689-709 (FCISVAVFLHYFLLVSFTWMG). A disulfide bond links C690 and C774. At 710 to 733 (LEAFHMYLALVKVFNTYIRKYILK) the chain is on the cytoplasmic side. The chain crosses the membrane as a helical span at residues 734 to 754 (FCIVGWGIPAVVVSIVLTISP). Over 755–785 (DNYGIGSYGKFPNGTPDDFCWINSSVVFYIT) the chain is Extracellular. N777 carries N-linked (GlcNAc...) asparagine glycosylation. Residues 786–806 (VVGYFCVIFLLNVSMFIVVLV) form a helical membrane-spanning segment. Residues 807 to 830 (QLCRIKKKKQLGAQRKTSIQDLRS) lie on the Cytoplasmic side of the membrane. The chain crosses the membrane as a helical span at residues 831 to 851 (IAGLTFLLGITWGFAFFAWGP). The Extracellular segment spans residues 852–853 (VN). The N-linked (GlcNAc...) asparagine glycan is linked to N853. Residues 854 to 874 (LTFMYLFAIFNTLQGFFIFIF) form a helical membrane-spanning segment. 3beta-hydroxyandrost-5-en-17-one is bound at residue N864. Residues 875 to 1013 (YCAAKENVRK…RGSLHFIEQM (139 aa)) lie on the Cytoplasmic side of the membrane. A Phosphoserine modification is found at S1006.

It belongs to the G-protein coupled receptor 2 family. Adhesion G-protein coupled receptor (ADGR) subfamily. Heterodimer of 2 chains generated by proteolytic processing; the large extracellular N-terminal fragment and the membrane-bound C-terminal fragment predominantly remain associated and non-covalently linked. Interacts with CFTR. In terms of processing, proteolytically cleaved into 2 subunits, an extracellular subunit and a seven-transmembrane subunit. Highly glycosylated. In terms of tissue distribution, epididymis-specific expression (at protein level). Associated with apical membranes of efferent ductule and proximal epididymal duct epithelia.

Its subcellular location is the apical cell membrane. Its activity is regulated as follows. Forms a heterodimer of 2 chains generated by proteolytic processing that remain associated through non-covalent interactions mediated by the GAIN-B domain. In the inactivated receptor, the Stachel sequence (also named stalk) is embedded in the GAIN-B domain, where it adopts a beta-strand conformation. On activation, the Stachel moves into the 7 transmembrane region and adopts a twisted hook-shaped configuration that forms contacts within the receptor, leading to coupling of a G-alpha protein, which activates signaling. The cleaved GAIN-B and N-terminal domains can then dissociate from the rest of the receptor. Deoxycorticosterone (DOC) acts as an antagonist of ADGRG2. Adhesion G-protein coupled receptor (aGPCR) for steroid hormones, such as dehydroepiandrosterone (DHEA; also named 3beta-hydroxyandrost-5-en-17-one) and androstenedione. Involved in a signal transduction pathway controlling epididymal function and male fertility. Ligand binding causes a conformation change that triggers signaling via guanine nucleotide-binding proteins (G proteins) and modulates the activity of downstream effectors, such as adenylate cyclase. ADGRG2 is coupled to G(s) G proteins and mediates activation of adenylate cyclase activity. Also able to couple with G(q) G proteins in vitro. May regulate fluid exchange within epididymis. The sequence is that of Adhesion G-protein coupled receptor G2 from Rattus norvegicus (Rat).